The sequence spans 197 residues: uncharacterized protein (197 aa).

Positions 1–23 (MSARAPKELRLALPPCLLNRTFA) are cleaved as a signal peptide. 2 N-linked (GlcNAc...) asparagine glycosylation sites follow: asparagine 19 and asparagine 26. Topologically, residues 24–61 (SPNASGSGNTGARGPGAGGSGTCITQVGQQLFQSFSST) are extracellular. A helical membrane pass occupies residues 62–82 (LVLIVLVTLIFCLIVLSLSTF). Over 83 to 197 (HIHKRRMKKR…EGLLQTVVLS (115 aa)) the chain is Cytoplasmic. Residues 94–179 (MQRAQEEYER…ASSPQGAHAV (86 aa)) form a disordered region. Composition is skewed to basic and acidic residues over residues 96–107 (RAQEEYERDHCS) and 125–136 (HAKETRLERQPR). Residues 147 to 161 (SSSSSSSPGLPCQGP) are compositionally biased toward low complexity. Over residues 162 to 171 (CAPPPPPPAS) the composition is skewed to pro residues.

It is found in the membrane. This is an uncharacterized protein from Pongo abelii (Sumatran orangutan).